We begin with the raw amino-acid sequence, 463 residues long: L-seryl-tRNA(Sec) selenium transferase (463 aa).

The residue at position 295 (K295) is an N6-(pyridoxal phosphate)lysine.

It belongs to the SelA family. As to quaternary structure, homodecamer; pentamer of dimers. Binds only one seryl-tRNA(Sec) per dimer. It depends on pyridoxal 5'-phosphate as a cofactor.

The protein localises to the cytoplasm. The enzyme catalyses L-seryl-tRNA(Sec) + selenophosphate + H(+) = L-selenocysteinyl-tRNA(Sec) + phosphate. It participates in aminoacyl-tRNA biosynthesis; selenocysteinyl-tRNA(Sec) biosynthesis; selenocysteinyl-tRNA(Sec) from L-seryl-tRNA(Sec) (bacterial route): step 1/1. In terms of biological role, converts seryl-tRNA(Sec) to selenocysteinyl-tRNA(Sec) required for selenoprotein biosynthesis. In Salmonella enteritidis PT4 (strain P125109), this protein is L-seryl-tRNA(Sec) selenium transferase.